Reading from the N-terminus, the 372-residue chain is NAD(P)H-quinone oxidoreductase subunit 1 (372 aa).

The next 8 helical transmembrane spans lie at 27–47 (AIWM…GVLV), 97–117 (WLFT…FLIV), 128–148 (VGMG…GLLM), 166–186 (AAQS…IAMM), 204–224 (ILGW…IAAL), 249–269 (YSGM…ILSS), 308–328 (SLGI…AILL), and 351–371 (VGLV…FAFG).

The protein belongs to the complex I subunit 1 family. NDH-1 is composed of at least 11 different subunits.

The protein localises to the cellular thylakoid membrane. It catalyses the reaction a plastoquinone + NADH + (n+1) H(+)(in) = a plastoquinol + NAD(+) + n H(+)(out). The catalysed reaction is a plastoquinone + NADPH + (n+1) H(+)(in) = a plastoquinol + NADP(+) + n H(+)(out). Functionally, NDH-1 shuttles electrons from an unknown electron donor, via FMN and iron-sulfur (Fe-S) centers, to quinones in the respiratory and/or the photosynthetic chain. The immediate electron acceptor for the enzyme in this species is believed to be plastoquinone. Couples the redox reaction to proton translocation, and thus conserves the redox energy in a proton gradient. The sequence is that of NAD(P)H-quinone oxidoreductase subunit 1 from Nostoc punctiforme (strain ATCC 29133 / PCC 73102).